The following is a 298-amino-acid chain: tRNA dimethylallyltransferase (298 aa).

16 to 23 contributes to the ATP binding site; that stretch reads GPTASGKS. Position 18-23 (18-23) interacts with substrate; it reads TASGKS. 2 interaction with substrate tRNA regions span residues 41–44 and 165–169; these read DSMQ and QRIVR.

This sequence belongs to the IPP transferase family. Monomer. Requires Mg(2+) as cofactor.

The enzyme catalyses adenosine(37) in tRNA + dimethylallyl diphosphate = N(6)-dimethylallyladenosine(37) in tRNA + diphosphate. Catalyzes the transfer of a dimethylallyl group onto the adenine at position 37 in tRNAs that read codons beginning with uridine, leading to the formation of N6-(dimethylallyl)adenosine (i(6)A). In Rhizobium radiobacter (Agrobacterium tumefaciens), this protein is tRNA dimethylallyltransferase.